The sequence spans 228 residues: 2,3-bisphosphoglycerate-dependent phosphoglycerate mutase (228 aa).

Substrate contacts are provided by residues 8–15, 21–22, R60, 87–90, K98, 114–115, and 183–184; these read RHGQSEWN, TG, ERHY, RR, and GN. The active-site Tele-phosphohistidine intermediate is H9. E87 (proton donor/acceptor) is an active-site residue.

This sequence belongs to the phosphoglycerate mutase family. BPG-dependent PGAM subfamily.

It catalyses the reaction (2R)-2-phosphoglycerate = (2R)-3-phosphoglycerate. Its pathway is carbohydrate degradation; glycolysis; pyruvate from D-glyceraldehyde 3-phosphate: step 3/5. Functionally, catalyzes the interconversion of 2-phosphoglycerate and 3-phosphoglycerate. The protein is 2,3-bisphosphoglycerate-dependent phosphoglycerate mutase of Staphylococcus aureus (strain Mu3 / ATCC 700698).